Here is a 125-residue protein sequence, read N- to C-terminus: Short coiled-coil protein (125 aa).

The tract at residues Met1 to Lys31 is disordered. Residues Lys43–Leu101 are a coiled coil.

This sequence belongs to the SCOC family. In terms of assembly, homodimer. Interacts with ARL1, ARL2 and ARL3. Directly interacts with FEZ1 and UVRAG. The interaction with UVRAG is reduced by amino acid starvation, but the complex is stabilized in the presence of FEZ1. Interacts with NRBF2.

The protein resides in the golgi apparatus membrane. The protein localises to the golgi apparatus. It is found in the trans-Golgi network. It localises to the cytoplasm. Its subcellular location is the cytosol. In terms of biological role, positive regulator of amino acid starvation-induced autophagy. In Mus musculus (Mouse), this protein is Short coiled-coil protein (Scoc).